A 611-amino-acid polypeptide reads, in one-letter code: Phosphomethylpyrimidine synthase (611 aa).

Substrate contacts are provided by residues Asn218, Met247, Tyr276, His312, 332–334 (SRG), 373–376 (DGLR), and Glu412. Residue His416 coordinates Zn(2+). Tyr439 provides a ligand contact to substrate. His480 is a Zn(2+) binding site. 3 residues coordinate [4Fe-4S] cluster: Cys560, Cys563, and Cys568.

This sequence belongs to the ThiC family. Homodimer. The cofactor is [4Fe-4S] cluster.

It carries out the reaction 5-amino-1-(5-phospho-beta-D-ribosyl)imidazole + S-adenosyl-L-methionine = 4-amino-2-methyl-5-(phosphooxymethyl)pyrimidine + CO + 5'-deoxyadenosine + formate + L-methionine + 3 H(+). The protein operates within cofactor biosynthesis; thiamine diphosphate biosynthesis. Its function is as follows. Catalyzes the synthesis of the hydroxymethylpyrimidine phosphate (HMP-P) moiety of thiamine from aminoimidazole ribotide (AIR) in a radical S-adenosyl-L-methionine (SAM)-dependent reaction. This chain is Phosphomethylpyrimidine synthase, found in Caulobacter sp. (strain K31).